The sequence spans 45 residues: Large ribosomal subunit protein bL34 (45 aa).

Positions 1 to 10 (MTKRTLEGTN) are enriched in basic and acidic residues. The segment at 1–27 (MTKRTLEGTNRKRKRTSGFRARMRSAT) is disordered. A compositionally biased stretch (basic residues) spans 11 to 23 (RKRKRTSGFRARM).

The protein belongs to the bacterial ribosomal protein bL34 family.

The protein is Large ribosomal subunit protein bL34 of Synechococcus elongatus (strain ATCC 33912 / PCC 7942 / FACHB-805) (Anacystis nidulans R2).